A 275-amino-acid polypeptide reads, in one-letter code: Ribosomal RNA small subunit methyltransferase A (275 aa).

Residues asparagine 19, leucine 21, glycine 46, glutamate 71, aspartate 94, and asparagine 117 each coordinate S-adenosyl-L-methionine.

The protein belongs to the class I-like SAM-binding methyltransferase superfamily. rRNA adenine N(6)-methyltransferase family. RsmA subfamily.

It localises to the cytoplasm. The catalysed reaction is adenosine(1518)/adenosine(1519) in 16S rRNA + 4 S-adenosyl-L-methionine = N(6)-dimethyladenosine(1518)/N(6)-dimethyladenosine(1519) in 16S rRNA + 4 S-adenosyl-L-homocysteine + 4 H(+). Its function is as follows. Specifically dimethylates two adjacent adenosines (A1518 and A1519) in the loop of a conserved hairpin near the 3'-end of 16S rRNA in the 30S particle. May play a critical role in biogenesis of 30S subunits. The chain is Ribosomal RNA small subunit methyltransferase A from Burkholderia pseudomallei (strain 668).